The following is a 32-amino-acid chain: Protamine-3A (32 aa).

The segment at 1–32 (PRRRRRSSSRPIRRRRRPRVSRRRRRGGRRRR) is disordered.

As to expression, testis.

It localises to the nucleus. Its subcellular location is the chromosome. Its function is as follows. Protamines substitute for histones in the chromatin of sperm during the haploid phase of spermatogenesis. They compact sperm DNA into a highly condensed, stable and inactive complex. This is Protamine-3A from Oncorhynchus mykiss (Rainbow trout).